Consider the following 236-residue polypeptide: MDSFLRLLIHGASGRMGQSLLRLASEDPSFQVTAAVVGNAPHRHVSDGVPFFAAAELAAVPAFDVAIDFSLPQGFSSLLALCVARAVPLVSGTTGLDSRQHEALVMAGARIPLVWGSNFSVGMAVLVNLVERAGDALSGWDCDIVESHHVHKQDAPSGSALTLGEAVACKGIAPRYTSLRAGDIIGDHLVQFTGLGERIELVHRASNRDVFARGALSVARRVVGRVPGCYRVRDLM.

NAD(+)-binding positions include G11 to M16, G92 to T94, and G116 to F119. H148 acts as the Proton donor/acceptor in catalysis. H149 contributes to the (S)-2,3,4,5-tetrahydrodipicolinate binding site. K152 (proton donor) is an active-site residue. (S)-2,3,4,5-tetrahydrodipicolinate is bound at residue G158–S159.

It belongs to the DapB family.

It localises to the cytoplasm. The catalysed reaction is (S)-2,3,4,5-tetrahydrodipicolinate + NAD(+) + H2O = (2S,4S)-4-hydroxy-2,3,4,5-tetrahydrodipicolinate + NADH + H(+). It catalyses the reaction (S)-2,3,4,5-tetrahydrodipicolinate + NADP(+) + H2O = (2S,4S)-4-hydroxy-2,3,4,5-tetrahydrodipicolinate + NADPH + H(+). Its pathway is amino-acid biosynthesis; L-lysine biosynthesis via DAP pathway; (S)-tetrahydrodipicolinate from L-aspartate: step 4/4. Functionally, catalyzes the conversion of 4-hydroxy-tetrahydrodipicolinate (HTPA) to tetrahydrodipicolinate. The protein is 4-hydroxy-tetrahydrodipicolinate reductase of Xylella fastidiosa (strain M23).